A 360-amino-acid chain; its full sequence is tRNA pseudouridine synthase D (360 aa).

The active-site Nucleophile is the aspartate 76. The TRUD domain maps to 151 to 332; the sequence is GMPNFFGYQR…HGIYKEKNAW (182 aa).

The protein belongs to the pseudouridine synthase TruD family.

The enzyme catalyses uridine(13) in tRNA = pseudouridine(13) in tRNA. Responsible for synthesis of pseudouridine from uracil-13 in transfer RNAs. This is tRNA pseudouridine synthase D from Nitratiruptor sp. (strain SB155-2).